We begin with the raw amino-acid sequence, 368 residues long: (3S,6E)-nerolidol synthase (368 aa).

Residues D91, N228, and S232 each coordinate Mg(2+). The DDXXE motif signature appears at 91–95 (DDLLE).

This sequence belongs to the terpene synthase family. Requires Mg(2+) as cofactor. The cofactor is Mn(2+).

It catalyses the reaction (2E,6E)-farnesyl diphosphate + H2O = (3S,6E)-nerolidol + diphosphate. The catalysed reaction is (2E)-geranyl diphosphate + H2O = (S)-linalool + diphosphate. It functions in the pathway secondary metabolite biosynthesis; terpenoid biosynthesis. Functionally, sesquiterpene synthase converting farnesyl diphosphate to nerolidol. Also has a monoterpene synthase activity, converting geranyl diphosphate into linalool as the major product. Has no diterpene synthase activity. The sequence is that of (3S,6E)-nerolidol synthase from Selaginella moellendorffii (Spikemoss).